A 199-amino-acid polypeptide reads, in one-letter code: Transcriptional regulatory protein DesR (199 aa).

One can recognise a Response regulatory domain in the interval 3 to 117; that stretch reads SIFIAEDQQM…ELANAIRSVM (115 aa). D54 is subject to 4-aspartylphosphate. Residues 131-196 form the HTH luxR-type domain; sequence LYSEANPLTD…EAITRSKEKG (66 aa). The segment at residues 155 to 174 is a DNA-binding region (H-T-H motif); it reads TKEIAQELSIKSGTVRNYIS.

In terms of processing, phosphorylated by DesK.

It is found in the cytoplasm. Its function is as follows. Member of the two-component regulatory system DesR/DesK, responsible for cold induction of the des gene coding for the Delta5 acyl-lipid desaturase. This Bacillus subtilis (strain 168) protein is Transcriptional regulatory protein DesR (desR).